Consider the following 407-residue polypeptide: Myeloid cell nuclear differentiation antigen (407 aa).

Residues 1–88 (MVNEYKKILL…VNNLRKEKSK (88 aa)) form the Pyrin domain. The disordered stretch occupies residues 108-207 (EVGLAAPAPT…RQVDARRNVP (100 aa)). Positions 131-137 (PVAQKRK) match the Nuclear localization signal motif. The segment covering 139-148 (PNKEKTEAKR) has biased composition (basic and acidic residues). Low complexity predominate over residues 177 to 190 (QTSSSTPSNTSFTP). An HIN-200 domain is found at 196-394 (AQRQVDARRN…CGSHSFIKVI (199 aa)).

Participates in a ternary complex with YY1 and the YY1 target DNA element. Binds nucleolin and nucleophosmin/NPM/B23. Expressed constitutively in cells of the myeloid lineage. Found in promyelocyte stage cells as well as in all other stage cells including peripheral blood monocytes and granulocytes. Also appears in myeloblast cells in some cases of acute myeloid Leukemia.

It is found in the nucleus. Its subcellular location is the cytoplasm. Functionally, may act as a transcriptional activator/repressor in the myeloid lineage. Plays a role in the granulocyte/monocyte cell-specific response to interferon. Stimulates the DNA binding of the transcriptional repressor protein YY1. This Homo sapiens (Human) protein is Myeloid cell nuclear differentiation antigen (MNDA).